Here is a 615-residue protein sequence, read N- to C-terminus: Isocitrate dehydrogenase kinase/phosphatase (615 aa).

ATP is bound by residues 325 to 331 (APGIKGM) and Lys-346. Asp-381 is a catalytic residue.

Belongs to the AceK family.

Its subcellular location is the cytoplasm. The enzyme catalyses L-seryl-[isocitrate dehydrogenase] + ATP = O-phospho-L-seryl-[isocitrate dehydrogenase] + ADP + H(+). Bifunctional enzyme which can phosphorylate or dephosphorylate isocitrate dehydrogenase (IDH) on a specific serine residue. This is a regulatory mechanism which enables bacteria to bypass the Krebs cycle via the glyoxylate shunt in response to the source of carbon. When bacteria are grown on glucose, IDH is fully active and unphosphorylated, but when grown on acetate or ethanol, the activity of IDH declines drastically concomitant with its phosphorylation. This Albidiferax ferrireducens (strain ATCC BAA-621 / DSM 15236 / T118) (Rhodoferax ferrireducens) protein is Isocitrate dehydrogenase kinase/phosphatase.